A 242-amino-acid polypeptide reads, in one-letter code: UPF0157 protein PA4798 (242 aa).

The tract at residues alanine 215–aspartate 242 is disordered.

It belongs to the UPF0157 (GrpB) family.

This is UPF0157 protein PA4798 from Pseudomonas aeruginosa (strain ATCC 15692 / DSM 22644 / CIP 104116 / JCM 14847 / LMG 12228 / 1C / PRS 101 / PAO1).